An 85-amino-acid chain; its full sequence is Large ribosomal subunit protein bL27 (85 aa).

Residues 1–25 (MAHKKAGGSSRNGRDSHSKRLGVKH) form a disordered region.

Belongs to the bacterial ribosomal protein bL27 family.

The sequence is that of Large ribosomal subunit protein bL27 from Buchnera aphidicola subsp. Baizongia pistaciae (strain Bp).